The sequence spans 719 residues: MFTSGKVLPTKIQPPLLRPMAYRVLSKKYGLSIKSDGLAALSDFIGSTFGMDWKRNPDTIKFLEVFATVWKQQERGLFVDSTGVKDVINELKEREKATLQESQNMASIPPKTKTYNNGGGKTTTIDRFLTKRPSPSDNDEGPLDQSIDDIPVSQATQIDEEELPMAQEISDQISSPARDQTPEEEFDNRILNWRDYFRIINTTDQKKFSYNPVKRQIFYQPPKDQLKSVLKIPNAQAKTDLFRTRYFLTRDRLLRNESFQSSHDTFNPLSSMIQLKNNINNNNQDDTPTGLSITQIKNLLGRDGQNFLILGVLKMNPKGQWSLEDASGSIDIDISQTLPSPGLFYIPGAIVLAEGIYYTVGHTFAVTSMTFPPGERRDKTLDHIGNLDLLGIHGTEKSSYIPRLDNEIKIRLHLLEQDLTHQKFVLLGGDLFLDDQHVMDGLKKVFTKLDQEAPTVIVLFGSFSSFPVHAAMSSKNISSTTEYKNNFDSLAEMLSQFENIINHTHVVLIPGPHDPWVSLCSLGANGSLPQSSIPTHFSKRMNKICKNITWASNPTRIAYLSQEIVLFRDNFLELCKRHQILFPVVESKRAEDLAELEEQMANNSIDDTTILVDRIISEKQQLPAKVLESRKVVKTLLDQGHLSPFVDSIRPISWDMDHTLTLYPIPSTLILADMSSAAYDLTYNGCKTINPGKFIHKRQARYIQFQPYLKSVSQEEVFF.

A disordered region spans residues 107–147; the sequence is SIPPKTKTYNNGGGKTTTIDRFLTKRPSPSDNDEGPLDQSI.

The protein belongs to the DNA polymerase epsilon subunit B family. In terms of assembly, heterotetramer. Consists of four subunits: POL2, DPB2, DPB3 and DPB4.

It localises to the nucleus. In terms of biological role, as accessory component of the DNA polymerase epsilon (DNA polymerase II) participates in chromosomal DNA replication. The sequence is that of DNA polymerase epsilon subunit B (DPB2) from Candida glabrata (strain ATCC 2001 / BCRC 20586 / JCM 3761 / NBRC 0622 / NRRL Y-65 / CBS 138) (Yeast).